The primary structure comprises 4592 residues: Intermembrane lipid transfer protein vps13D (4592 aa).

Residues 3 to 102 form the Chorein N-terminal domain; it reads FESVVAEVID…SSTNVSSNYS (100 aa). Disordered stretches follow at residues 95 to 142, 157 to 199, 286 to 307, 445 to 529, 574 to 605, 826 to 861, 1040 to 1083, 1219 to 1249, 1655 to 1717, 1855 to 1886, 1971 to 2001, 2025 to 2056, and 2245 to 2270; these read TNVS…TASQ, LDKK…IDSQ, STTSSNNNNNNNNNNTTSSSSS, KKDD…IKGI, SNSTTTNNSNNNSSSSPNILATSPSNNSLSPM, NYNNQSSSSSSSSQPPPPKPTEETSTTNKPKKQQGI, TTSP…KRQW, YFKNKRKEENEQNEGNTEDDEQEEEEQEKKP, QQQE…QQSN, SNNNNDNNNDNNNSNNSNNNNNTSNGSGNSLF, TSSLDNTSISTTTTTTTTTTTTTTTTTTTTS, PLINDNSNKSPTSKSSSSKSSSSKSSKKEQQQ, and NNNNNNNNNNNNNNNNNNNNNTNIIN. 2 stretches are compositionally biased toward low complexity: residues 117–139 and 172–199; these read SSSNNNNNNNNDSSSSSSNTTST and KSTNTTTNNNGINNSNDKNKNNNNIDSQ. A coiled-coil region spans residues 437–517; it reads KNATIKLNKK…KKKEEKGKSK (81 aa). Over residues 445–457 the composition is skewed to basic and acidic residues; the sequence is KKDDKKDDKKDDI. Over residues 458–474 the composition is skewed to low complexity; sequence NSSSSSIGSSNSSNNTP. A compositionally biased stretch (basic and acidic residues) spans 475-529; that stretch reads TKDKNKEKEKDKEKEKEKEKKKEKEKLKLEEKKKKKEEKGKSKSKDSKKNKIKGI. Over residues 574–591 the composition is skewed to low complexity; sequence SNSTTTNNSNNNSSSSPN. Positions 592 to 603 are enriched in polar residues; sequence ILATSPSNNSLS. The span at 829 to 838 shows a compositional bias: low complexity; it reads NQSSSSSSSS. Residues 1040–1059 are compositionally biased toward polar residues; the sequence is TTSPTFNSLNNKPSTLQNNH. Residues 1064-1076 are compositionally biased toward low complexity; that stretch reads NGNSSNNNNTDSP. The span at 1234-1244 shows a compositional bias: acidic residues; that stretch reads NTEDDEQEEEE. Composition is skewed to low complexity over residues 1669 to 1689 and 1702 to 1715; these read KSINSKPPSPKLSLMSPLRKS and QQQQQQQQQQQQQQ. The span at 2037 to 2048 shows a compositional bias: low complexity; the sequence is SKSSSSKSSSSK. One copy of the TPR 1 repeat lies at 2321 to 2354; sequence TLQINDLGANIISIGNKSTSIKCFLRSIRLSDSR. Disordered stretches follow at residues 2456 to 2489, 2862 to 2882, 3006 to 3035, 3106 to 3129, 3356 to 3384, 3560 to 3580, and 3630 to 3679; these read KTNNNNNNNNNNYNNTNSNNNNNQEEEEKDSIST, AVSTSNNPNGSGYNNSNNNNG, GEQKGKKKSTSTSTSPTLSSQPSSSSSSSS, NSSGYNSSSPSPSSSSSPSSSSSN, KLPTSPQTSSSSSPPPATTTTSTTTKRTT, NSLKIEQGRKSKKQQQQHRHN, and STNH…SKLK. 3 stretches are compositionally biased toward low complexity: residues 2458–2478, 2864–2880, and 3015–3035; these read NNNNNNNNNNYNNTNSNNNNN, STSNNPNGSGYNNSNNN, and TSTSTSPTLSSQPSSSSSSSS. Positions 3358 to 3384 are enriched in low complexity; the sequence is PTSPQTSSSSSPPPATTTTSTTTKRTT. Over residues 3569–3580 the composition is skewed to basic residues; it reads KSKKQQQQHRHN. Over residues 3640–3679 the composition is skewed to low complexity; sequence SSTFNNSSNDNINNGNSNNNTSNSLSPPSSSSSINLSKLK. One copy of the TPR 2 repeat lies at 3789–3822; the sequence is EVPKPYLGRVDIKDNDTHTSIHFYDQDTEYSPFR. 2 stretches are compositionally biased toward low complexity: residues 3872–3894 and 4111–4135; these read TTTTTTTTNSTNDINNDNNNNNN and QQLQQNPQQQQPQQQNNEIQNNPIN. Disordered stretches follow at residues 3872 to 3897 and 4105 to 4135; these read TTTTTTTTNSTNDINNDNNNNNNQYI and KKHKKNQQLQQNPQQQQPQQQNNEIQNNPIN.

It localises to the membrane. In terms of biological role, mediates the transfer of lipids between membranes at organelle contact sites. The chain is Intermembrane lipid transfer protein vps13D (vps13D) from Dictyostelium discoideum (Social amoeba).